Consider the following 284-residue polypeptide: MKKIGIFAKVHEEPLEMADQLQKWLVNRDIEVVRRESSPPVLDVTQSNPGHAPADLSCVIVLGGDGTFLSAARWIGNQEIPILGVKFGAVGFLSETRKQDLYPVLESVLKKDFTTQTRTRLLATVREDEKIITTQTVLNDVVINNGTLARLANVNTYVDEEYLTTFRADGLIVATPTGSTAYSLAAGGPILEPQVAAIVLTPICPFTLTNRPLIVTDTSTICMTLAATAMDVTLTFDGQAGLKLNEHHTITIQKAPVPTIMIKVPGQSYFDVLKTKLRWSGGKV.

Aspartate 65 acts as the Proton acceptor in catalysis. NAD(+) contacts are provided by residues 65 to 66 (DG), 139 to 140 (ND), arginine 150, arginine 167, aspartate 169, and glutamine 239.

Belongs to the NAD kinase family. A divalent metal cation is required as a cofactor.

Its subcellular location is the cytoplasm. It carries out the reaction NAD(+) + ATP = ADP + NADP(+) + H(+). In terms of biological role, involved in the regulation of the intracellular balance of NAD and NADP, and is a key enzyme in the biosynthesis of NADP. Catalyzes specifically the phosphorylation on 2'-hydroxyl of the adenosine moiety of NAD to yield NADP. The chain is NAD kinase from Desulfatibacillum aliphaticivorans.